The chain runs to 297 residues: Homoserine kinase (297 aa).

ATP is bound at residue 82–92; sequence PLTRGLGSSAS.

The protein belongs to the GHMP kinase family. Homoserine kinase subfamily.

It is found in the cytoplasm. The catalysed reaction is L-homoserine + ATP = O-phospho-L-homoserine + ADP + H(+). It participates in amino-acid biosynthesis; L-threonine biosynthesis; L-threonine from L-aspartate: step 4/5. Its function is as follows. Catalyzes the ATP-dependent phosphorylation of L-homoserine to L-homoserine phosphate. In Bacillus cereus (strain ATCC 10987 / NRS 248), this protein is Homoserine kinase.